A 412-amino-acid polypeptide reads, in one-letter code: Serine hydroxymethyltransferase (412 aa).

(6S)-5,6,7,8-tetrahydrofolate is bound by residues L117 and 121–123; that span reads GHL. At K226 the chain carries N6-(pyridoxal phosphate)lysine. Residues E242 and 350–352 each bind (6S)-5,6,7,8-tetrahydrofolate; that span reads SPF.

Belongs to the SHMT family. As to quaternary structure, homodimer. The cofactor is pyridoxal 5'-phosphate.

It is found in the cytoplasm. It carries out the reaction (6R)-5,10-methylene-5,6,7,8-tetrahydrofolate + glycine + H2O = (6S)-5,6,7,8-tetrahydrofolate + L-serine. It participates in one-carbon metabolism; tetrahydrofolate interconversion. Its pathway is amino-acid biosynthesis; glycine biosynthesis; glycine from L-serine: step 1/1. Its function is as follows. Catalyzes the reversible interconversion of serine and glycine with tetrahydrofolate (THF) serving as the one-carbon carrier. Appears to be specific for THF as the pteridine substrate, since the use of tetrahydromethanopterin (H4MPT) is much less efficient. Also exhibits THF-independent aldolase activity toward beta-hydroxyamino acids, producing glycine and aldehydes, via a retro-aldol mechanism. Thus, is able to catalyze the cleavage of L-allo-threonine and L-threo-beta-phenylserine. The polypeptide is Serine hydroxymethyltransferase (Methanosarcina barkeri (strain Fusaro / DSM 804)).